We begin with the raw amino-acid sequence, 678 residues long: AAC-rich mRNA clone AAC4 protein (678 aa).

Over residues 55-73 the composition is skewed to low complexity; it reads NNNNNNNNNNNNNNNNNNN. The segment at 55-75 is disordered; the sequence is NNNNNNNNNNNNNNNNNNNTS. The chain crosses the membrane as a helical span at residues 243–263; that stretch reads IIPIYHEIILVLCNWLVVAFY. Over residues 318-346 the composition is skewed to low complexity; that stretch reads NNNNNNNNNNNNNNNNNNNNNNNNKTNNN. The tract at residues 318 to 347 is disordered; that stretch reads NNNNNNNNNNNNNNNNNNNNNNNNKTNNNQ.

Its subcellular location is the membrane. The protein is AAC-rich mRNA clone AAC4 protein (AAC4) of Dictyostelium discoideum (Social amoeba).